The sequence spans 355 residues: 3-dehydroquinate synthase (355 aa).

Residues Glu71–Lys76, Gly105–Asp109, Thr129–Ser130, Lys142, Lys151, and Thr169–Thr172 contribute to the NAD(+) site. 3 residues coordinate Zn(2+): Glu184, His246, and His263.

This sequence belongs to the sugar phosphate cyclases superfamily. Dehydroquinate synthase family. It depends on NAD(+) as a cofactor. Co(2+) serves as cofactor. Zn(2+) is required as a cofactor.

It is found in the cytoplasm. It carries out the reaction 7-phospho-2-dehydro-3-deoxy-D-arabino-heptonate = 3-dehydroquinate + phosphate. Its pathway is metabolic intermediate biosynthesis; chorismate biosynthesis; chorismate from D-erythrose 4-phosphate and phosphoenolpyruvate: step 2/7. In terms of biological role, catalyzes the conversion of 3-deoxy-D-arabino-heptulosonate 7-phosphate (DAHP) to dehydroquinate (DHQ). This is 3-dehydroquinate synthase from Streptococcus mutans serotype c (strain ATCC 700610 / UA159).